The primary structure comprises 367 residues: Glutamate 5-kinase (367 aa).

Lysine 10 contributes to the ATP binding site. 3 residues coordinate substrate: serine 50, aspartate 137, and asparagine 149. Residues 169-170 and 211-217 contribute to the ATP site; these read TD and TGGMATK. The PUA domain occupies 275-353; it reads AGVIIVDNGA…QEISQILGYE (79 aa).

This sequence belongs to the glutamate 5-kinase family.

The protein localises to the cytoplasm. The enzyme catalyses L-glutamate + ATP = L-glutamyl 5-phosphate + ADP. It functions in the pathway amino-acid biosynthesis; L-proline biosynthesis; L-glutamate 5-semialdehyde from L-glutamate: step 1/2. Functionally, catalyzes the transfer of a phosphate group to glutamate to form L-glutamate 5-phosphate. The protein is Glutamate 5-kinase of Proteus mirabilis (strain HI4320).